The following is a 200-amino-acid chain: uncharacterized protein (200 aa).

Residues 1 to 21 (MSNSAQRDARNSRDESARASD) are disordered. The segment covering 7 to 21 (RDARNSRDESARASD) has biased composition (basic and acidic residues).

This is an uncharacterized protein from Mycobacterium tuberculosis (strain ATCC 25618 / H37Rv).